The sequence spans 359 residues: Mannonate dehydratase (359 aa).

It belongs to the mannonate dehydratase family. The cofactor is Fe(2+). Mn(2+) serves as cofactor.

The catalysed reaction is D-mannonate = 2-dehydro-3-deoxy-D-gluconate + H2O. Its pathway is carbohydrate metabolism; pentose and glucuronate interconversion. In terms of biological role, catalyzes the dehydration of D-mannonate. The polypeptide is Mannonate dehydratase (uxuA) (Bacillus subtilis (strain 168)).